A 223-amino-acid polypeptide reads, in one-letter code: MNKDLAAMRVGYAHQGADGRYVDSDLDADQLIGGWLPLMRLWLEDAVEAGVPEPNAMTLGTVDEHGHPCTRTVLCKGLSTDGVLFFTNYDSDKGRQLEAVPYASVTFTWVPVARQITVRGPVERVSAEVTDEYWHSRPRGSRLGAWASEQSKPIGSRAELDAALLHAAERFPVDVDIPVRPDWGGILIRPAVVEFWQGRANRMHNRIRTSLVDGSWTVERLQP.

Substrate contacts are provided by residues 9–12 (RVGY) and Lys-76. Residues 71–76 (RTVLCK), 86–87 (FT), Lys-93, and Gln-115 each bind FMN. 3 residues coordinate substrate: Tyr-133, Arg-137, and Ser-141. Residues 150–151 (QS) and Trp-196 each bind FMN. 202 to 204 (RMH) contacts substrate. Arg-206 contributes to the FMN binding site.

It belongs to the pyridoxamine 5'-phosphate oxidase family. Homodimer. FMN is required as a cofactor.

The catalysed reaction is pyridoxamine 5'-phosphate + O2 + H2O = pyridoxal 5'-phosphate + H2O2 + NH4(+). It carries out the reaction pyridoxine 5'-phosphate + O2 = pyridoxal 5'-phosphate + H2O2. Its pathway is cofactor metabolism; pyridoxal 5'-phosphate salvage; pyridoxal 5'-phosphate from pyridoxamine 5'-phosphate: step 1/1. It functions in the pathway cofactor metabolism; pyridoxal 5'-phosphate salvage; pyridoxal 5'-phosphate from pyridoxine 5'-phosphate: step 1/1. Its function is as follows. Catalyzes the oxidation of either pyridoxine 5'-phosphate (PNP) or pyridoxamine 5'-phosphate (PMP) into pyridoxal 5'-phosphate (PLP). The protein is Pyridoxine/pyridoxamine 5'-phosphate oxidase of Rhodococcus jostii (strain RHA1).